A 342-amino-acid chain; its full sequence is Tetraacyldisaccharide 4'-kinase (342 aa).

Thr-68–Thr-75 is a binding site for ATP.

Belongs to the LpxK family.

The catalysed reaction is a lipid A disaccharide + ATP = a lipid IVA + ADP + H(+). The protein operates within glycolipid biosynthesis; lipid IV(A) biosynthesis; lipid IV(A) from (3R)-3-hydroxytetradecanoyl-[acyl-carrier-protein] and UDP-N-acetyl-alpha-D-glucosamine: step 6/6. In terms of biological role, transfers the gamma-phosphate of ATP to the 4'-position of a tetraacyldisaccharide 1-phosphate intermediate (termed DS-1-P) to form tetraacyldisaccharide 1,4'-bis-phosphate (lipid IVA). This chain is Tetraacyldisaccharide 4'-kinase, found in Burkholderia vietnamiensis (strain G4 / LMG 22486) (Burkholderia cepacia (strain R1808)).